Reading from the N-terminus, the 467-residue chain is UDP-N-acetylmuramate--L-alanine ligase (467 aa).

114-120 (GTHGKTT) provides a ligand contact to ATP.

The protein belongs to the MurCDEF family.

It is found in the cytoplasm. It carries out the reaction UDP-N-acetyl-alpha-D-muramate + L-alanine + ATP = UDP-N-acetyl-alpha-D-muramoyl-L-alanine + ADP + phosphate + H(+). The protein operates within cell wall biogenesis; peptidoglycan biosynthesis. Functionally, cell wall formation. The chain is UDP-N-acetylmuramate--L-alanine ligase from Azorhizobium caulinodans (strain ATCC 43989 / DSM 5975 / JCM 20966 / LMG 6465 / NBRC 14845 / NCIMB 13405 / ORS 571).